Reading from the N-terminus, the 302-residue chain is Recombination-associated protein RdgC (302 aa).

It belongs to the RdgC family.

It localises to the cytoplasm. The protein localises to the nucleoid. In terms of biological role, may be involved in recombination. The chain is Recombination-associated protein RdgC from Actinobacillus pleuropneumoniae serotype 3 (strain JL03).